The chain runs to 239 residues: Transcriptional regulatory protein RstA (239 aa).

In terms of domain architecture, Response regulatory spans 3 to 116 (TIVFVEDDAE…VLLARLRLHL (114 aa)). A 4-aspartylphosphate modification is found at D52. The ompR/PhoB-type DNA-binding region spans 136–235 (YKALHFGTLT…VRNKGYLFAP (100 aa)).

In terms of processing, phosphorylated by RstB.

The protein resides in the cytoplasm. Its function is as follows. Member of the two-component regulatory system RstB/RstA. The sequence is that of Transcriptional regulatory protein RstA (rstA) from Escherichia coli (strain K12).